The chain runs to 138 residues: ATP synthase epsilon chain, chloroplastic (138 aa).

It belongs to the ATPase epsilon chain family. In terms of assembly, F-type ATPases have 2 components, CF(1) - the catalytic core - and CF(0) - the membrane proton channel. CF(1) has five subunits: alpha(3), beta(3), gamma(1), delta(1), epsilon(1). CF(0) has three main subunits: a, b and c.

It localises to the plastid. The protein resides in the chloroplast thylakoid membrane. Functionally, produces ATP from ADP in the presence of a proton gradient across the membrane. In Huperzia lucidula (Shining clubmoss), this protein is ATP synthase epsilon chain, chloroplastic.